The primary structure comprises 360 residues: MASTSFFPPRPSSTLAEIASLTKATLVDASYAEHRITGLASLDEAGPMHLSFFENLRYSDELANTRAGACLVSERFEGRVPSHVAVLRARRPFHAFVAYARHLYSDALRPHTGIGAPGIAPTAVIHETAKLEDEVTVEPLAVIGPDVEIGSGTVIGAGAVIAAGVKIGRDCDIGAGSHLQHALIGNNVLMHPGCHIGQDGFGFIFAGQHTKVPQTGRVIIQHDVELGAGTTIDRGSLRDTVIGEGTKIDNQVQIGHNVTIGRHCVIAAKCGLAGSLTLGDNVALGAMVGINNHVMIGDGAQVAAMSGVKDSIPAGERWGGIFARPTRTWFREMLAVRRLAEGSGAETAARPDDDRDEGRG.

His-256 (proton acceptor) is an active-site residue. Positions 341 to 360 are disordered; sequence EGSGAETAARPDDDRDEGRG. Basic and acidic residues predominate over residues 349–360; the sequence is ARPDDDRDEGRG.

It belongs to the transferase hexapeptide repeat family. LpxD subfamily. Homotrimer.

It catalyses the reaction a UDP-3-O-[(3R)-3-hydroxyacyl]-alpha-D-glucosamine + a (3R)-hydroxyacyl-[ACP] = a UDP-2-N,3-O-bis[(3R)-3-hydroxyacyl]-alpha-D-glucosamine + holo-[ACP] + H(+). The protein operates within bacterial outer membrane biogenesis; LPS lipid A biosynthesis. Its function is as follows. Catalyzes the N-acylation of UDP-3-O-acylglucosamine using 3-hydroxyacyl-ACP as the acyl donor. Is involved in the biosynthesis of lipid A, a phosphorylated glycolipid that anchors the lipopolysaccharide to the outer membrane of the cell. The sequence is that of UDP-3-O-acylglucosamine N-acyltransferase from Rhodopseudomonas palustris (strain TIE-1).